Reading from the N-terminus, the 82-residue chain is Beta-insect toxin AaBTxL1 (82 aa).

An N-terminal signal peptide occupies residues 1–22 (MMKLVLFSVIVILFSLIGSIHG). Residues 25–82 (VPGNYPLDRSGKKYPCTITWKKNPSCIQICKKHGVKYGYCFDFQCWCEIFGRLKTFKI) enclose the LCN-type CS-alpha/beta domain. 3 cysteine pairs are disulfide-bonded: Cys-40/Cys-64, Cys-50/Cys-69, and Cys-54/Cys-71.

The protein belongs to the long (3 C-C) scorpion toxin superfamily. Sodium channel inhibitor family. Beta subfamily. As to expression, expressed by the venom gland.

Its subcellular location is the secreted. Its function is as follows. Shifts the voltage of activation of para/tipE voltage-dependent sodium channels (Nav) toward more negative potentials. In Androctonus australis (Sahara scorpion), this protein is Beta-insect toxin AaBTxL1.